A 364-amino-acid chain; its full sequence is Methylthioribose-1-phosphate isomerase (364 aa).

The active-site Proton donor is Asp254.

This sequence belongs to the eIF-2B alpha/beta/delta subunits family. MtnA subfamily.

Its subcellular location is the cytoplasm. It localises to the nucleus. It carries out the reaction 5-(methylsulfanyl)-alpha-D-ribose 1-phosphate = 5-(methylsulfanyl)-D-ribulose 1-phosphate. It functions in the pathway amino-acid biosynthesis; L-methionine biosynthesis via salvage pathway; L-methionine from S-methyl-5-thio-alpha-D-ribose 1-phosphate: step 1/6. In terms of biological role, catalyzes the interconversion of methylthioribose-1-phosphate (MTR-1-P) into methylthioribulose-1-phosphate (MTRu-1-P). The sequence is that of Methylthioribose-1-phosphate isomerase from Drosophila sechellia (Fruit fly).